We begin with the raw amino-acid sequence, 359 residues long: UDP-3-O-acylglucosamine N-acyltransferase (359 aa).

The Proton acceptor role is filled by His253.

The protein belongs to the transferase hexapeptide repeat family. LpxD subfamily. As to quaternary structure, homotrimer.

The enzyme catalyses a UDP-3-O-[(3R)-3-hydroxyacyl]-alpha-D-glucosamine + a (3R)-hydroxyacyl-[ACP] = a UDP-2-N,3-O-bis[(3R)-3-hydroxyacyl]-alpha-D-glucosamine + holo-[ACP] + H(+). It functions in the pathway bacterial outer membrane biogenesis; LPS lipid A biosynthesis. Functionally, catalyzes the N-acylation of UDP-3-O-acylglucosamine using 3-hydroxyacyl-ACP as the acyl donor. Is involved in the biosynthesis of lipid A, a phosphorylated glycolipid that anchors the lipopolysaccharide to the outer membrane of the cell. In Burkholderia lata (strain ATCC 17760 / DSM 23089 / LMG 22485 / NCIMB 9086 / R18194 / 383), this protein is UDP-3-O-acylglucosamine N-acyltransferase.